Consider the following 338-residue polypeptide: Phosphoribosylformylglycinamidine cyclo-ligase (338 aa).

It belongs to the AIR synthase family.

The protein resides in the cytoplasm. The catalysed reaction is 2-formamido-N(1)-(5-O-phospho-beta-D-ribosyl)acetamidine + ATP = 5-amino-1-(5-phospho-beta-D-ribosyl)imidazole + ADP + phosphate + H(+). Its pathway is purine metabolism; IMP biosynthesis via de novo pathway; 5-amino-1-(5-phospho-D-ribosyl)imidazole from N(2)-formyl-N(1)-(5-phospho-D-ribosyl)glycinamide: step 2/2. The sequence is that of Phosphoribosylformylglycinamidine cyclo-ligase from Thermoplasma acidophilum (strain ATCC 25905 / DSM 1728 / JCM 9062 / NBRC 15155 / AMRC-C165).